Reading from the N-terminus, the 201-residue chain is MICOS complex subunit MIC27 (201 aa).

Residues 1 to 31 (MTQDKPIVETISNAGEQVTNVFGQFWQLVTS) constitute a mitochondrion transit peptide. The Cytoplasmic portion of the chain corresponds to 32-117 (KNTTNNGDSK…KCNAYLTEEW (86 aa)). The chain crosses the membrane as a helical span at residues 118–138 (TALPKAAAITVGGMAGFVLGL). Over 139–145 (KRGPVGR) the chain is Mitochondrial intermembrane. Residues 146–166 (LLTTTIGLATMAAFCYPIEAV) form a helical membrane-spanning segment. The Cytoplasmic segment spans residues 167-201 (DVAKTGRAHAEQTWYSFQESPTPSAIVKTNLSPPK).

This sequence belongs to the apolipoprotein O/MICOS complex subunit Mic27 family. In terms of assembly, component of the mitochondrial contact site and cristae organizing system (MICOS) complex.

It localises to the mitochondrion outer membrane. Functionally, sustains mitochondrial morphology probably through maintaining cristae morphology. May act as a component of the MICOS complex, a large protein complex of the mitochondria. This is MICOS complex subunit MIC27 from Caenorhabditis elegans.